The primary structure comprises 476 residues: Transcription factor HBP-1b(c1) (476 aa).

3 disordered regions span residues 1-29 (ESRRGGGGPAAAAAAAGDPRGPMPGFGAP), 133-159 (HNNDNWGESSMADTSPRTDTSTDPDID), and 171-207 (QLAAPTASDSSDKSRDKLDHKSLRRLAQNREAARKSR). A compositionally biased stretch (low complexity) spans 10-25 (AAAAAAAGDPRGPMPG). Over residues 135 to 144 (NDNWGESSMA) the composition is skewed to polar residues. The span at 180–191 (SSDKSRDKLDHK) shows a compositional bias: basic and acidic residues. The bZIP domain occupies 189–252 (DHKSLRRLAQ…SSGDQSQSAS (64 aa)). The segment at 191–211 (KSLRRLAQNREAARKSRLRKK) is basic motif. The stretch at 201-242 (EAARKSRLRKKAYIQNLESSRLKLTQLEQELQRARQQGIFIS) forms a coiled coil. The segment at 217–231 (LESSRLKLTQLEQEL) is leucine-zipper. In terms of domain architecture, DOG1 spans 256-473 (AVAFDMEYAR…RALSSLWLAR (218 aa)).

The protein belongs to the bZIP family. As to quaternary structure, binds DNA as a dimer.

The protein resides in the nucleus. Its function is as follows. Transcriptional activator that binds specifically to the DNA sequence 5'-TGACG-3'. Recognizes ocs elements like the as-1 motif of the cauliflower mosaic virus 35S promoter. Binding to the as-1-like cis elements mediate auxin- and salicylic acid-inducible transcription. Binds to the hexamer motif 5'-ACGTCA-3' of histone gene promoters. The sequence is that of Transcription factor HBP-1b(c1) from Triticum aestivum (Wheat).